Consider the following 363-residue polypeptide: Tetraacyldisaccharide 4'-kinase (363 aa).

78 to 85 (TVGGNGKT) is a binding site for ATP.

This sequence belongs to the LpxK family.

It carries out the reaction a lipid A disaccharide + ATP = a lipid IVA + ADP + H(+). Its pathway is glycolipid biosynthesis; lipid IV(A) biosynthesis; lipid IV(A) from (3R)-3-hydroxytetradecanoyl-[acyl-carrier-protein] and UDP-N-acetyl-alpha-D-glucosamine: step 6/6. Transfers the gamma-phosphate of ATP to the 4'-position of a tetraacyldisaccharide 1-phosphate intermediate (termed DS-1-P) to form tetraacyldisaccharide 1,4'-bis-phosphate (lipid IVA). In Wigglesworthia glossinidia brevipalpis, this protein is Tetraacyldisaccharide 4'-kinase.